Consider the following 227-residue polypeptide: AN1-type zinc finger protein 3 (227 aa).

Residues P12–P44 form an A20-type zinc finger. Residues C18, C20, C32, and C35 each coordinate Zn(2+). A disordered region spans residues K41 to Q151. Composition is skewed to low complexity over residues T49–L59 and S66–T77. Polar residues-rich tracts occupy residues L78–P94 and I111–E127. Residues R135 to R148 are compositionally biased toward basic and acidic residues. The AN1-type zinc finger occupies Q151 to G200. Positions 157, 160, 174, 176, 181, 184, 190, and 192 each coordinate Zn(2+).

This Rattus norvegicus (Rat) protein is AN1-type zinc finger protein 3 (Zfand3).